A 92-amino-acid chain; its full sequence is Small ribosomal subunit protein uS19 (92 aa).

Belongs to the universal ribosomal protein uS19 family.

Its function is as follows. Protein S19 forms a complex with S13 that binds strongly to the 16S ribosomal RNA. The protein is Small ribosomal subunit protein uS19 of Streptococcus thermophilus (strain ATCC BAA-491 / LMD-9).